Consider the following 242-residue polypeptide: MAPK-interacting and spindle-stabilizing protein-like (242 aa).

Disordered stretches follow at residues 1–145 (MSDE…SLGP) and 192–242 (PPGA…HSYH). An N-acetylserine modification is found at Ser2. Phosphoserine is present on residues Ser2, Ser6, and Ser15. Residues 13-29 (EQSSAKPPAVTNTKAGH) show a composition bias toward polar residues. Positions 30–43 (SSQGWPGSSPWSNP) are enriched in low complexity. Composition is skewed to pro residues over residues 44–53 (SAPPAMPSGL) and 75–114 (SMPP…PGPT). A compositionally biased stretch (low complexity) spans 192–210 (PPGAWGPAAPYPGPAGSYP).

The protein belongs to the MISS family.

This chain is MAPK-interacting and spindle-stabilizing protein-like (Mapk1ip1l), found in Mus musculus (Mouse).